Reading from the N-terminus, the 148-residue chain is Angiogenin-1 (148 aa).

Residues 1 to 23 (MVMVLSPLLLVFILGLGLTPVAP) form the signal peptide. Catalysis depends on histidine 37, which acts as the Proton acceptor. Residue arginine 45 coordinates tRNA. 3 disulfide bridges follow: cysteine 50/cysteine 105, cysteine 63/cysteine 116, and cysteine 81/cysteine 131. Positions 55–59 (KNRRL) match the Nucleolar localization signal motif. TRNA contacts are provided by cysteine 105 and isoleucine 127. The Proton donor role is filled by histidine 138.

This sequence belongs to the pancreatic ribonuclease family. In terms of assembly, homodimer. Interacts with RNH1; inhibiting ANG ribonuclease activity. As to expression, serum and milk.

It is found in the secreted. The protein localises to the nucleus. It localises to the nucleolus. Its subcellular location is the cytoplasm. The protein resides in the stress granule. Functionally, secreted ribonuclease that can either promote or restrict cell proliferation of target cells, depending on the context. Endocytosed in target cells via its receptor PLXNB2 and translocates to the cytoplasm or nucleus. Under stress conditions, localizes to the cytoplasm and promotes the assembly of stress granules (SGs): specifically cleaves a subset of tRNAs within anticodon loops to produce tRNA-derived stress-induced fragments (tiRNAs), resulting in translation repression and inhibition of cell proliferation. tiRNas also prevent formation of apoptosome, thereby promoting cell survival. Preferentially cleaves RNAs between a pyrimidine and an adenosine residue, suggesting that it cleaves the anticodon loop of tRNA(Ala) (32-UUAGCAU-38) after positions 33 and 36. Cleaves a subset of tRNAs, including tRNA(Ala), tRNA(Glu), tRNA(Gly), tRNA(Lys), tRNA(Val), tRNA(His), tRNA(Asp) and tRNA(Sec). Under growth conditions and in differentiated cells, translocates to the nucleus and stimulates ribosomal RNA (rRNA) transcription, including that containing the initiation site sequences of 45S rRNA, thereby promoting cell growth and proliferation. Angiogenin induces vascularization of normal and malignant tissues via its ability to promote rRNA transcription. The protein is Angiogenin-1 (ANG1) of Bos taurus (Bovine).